The following is a 253-amino-acid chain: Eukaryotic initiation factor 4A-6 (253 aa).

The Helicase ATP-binding domain occupies 1-82 (HVVVGTPGRV…RKFMNKPVRI (82 aa)). Positions 30-33 (DEAD) match the DEAD box motif. Residues 93–253 (GIKQFYVNVD…EELPANVADL (161 aa)) form the Helicase C-terminal domain.

The protein belongs to the DEAD box helicase family. eIF4A subfamily. In terms of assembly, eIF4F is a multi-subunit complex, the composition of which varies with external and internal environmental conditions. It is composed of at least EIF4A, EIF4E and EIF4G.

It carries out the reaction ATP + H2O = ADP + phosphate + H(+). Its function is as follows. ATP-dependent RNA helicase which is a subunit of the eIF4F complex involved in cap recognition and is required for mRNA binding to ribosome. In the current model of translation initiation, eIF4A unwinds RNA secondary structures in the 5'-UTR of mRNAs which is necessary to allow efficient binding of the small ribosomal subunit, and subsequent scanning for the initiator codon. This Nicotiana tabacum (Common tobacco) protein is Eukaryotic initiation factor 4A-6.